A 305-amino-acid chain; its full sequence is MATKNEEILRKPDWLKIKLNTNENYTGLKKMMRKKNLNTVCEEAKCPNIHECWGARRTATFMILGAVCTRACRFCAVKTGLPNELDLNEPERVAESVELMNLKHVVITAVARDDLRDAGSNVYAETVRKVRERNPFTTIEILPSDMGGDYDALETLMASRPDILNHNIETVRRLTPRVRARATYDRTLEFLRRSKELQPDIPTKSSIMVGLGETIEEIYETMDDLRANDVDILTIGQYLQPSRKHLKVQKYYTPLEFGKLRKVAMDKGFKHCQAGPLVRSSYHADEQVNEAAKEKQRQGEAQLNS.

[4Fe-4S] cluster-binding residues include C41, C46, C52, C68, C72, C75, and S281. Residues 54–270 (GARRTATFMI…RKVAMDKGFK (217 aa)) enclose the Radical SAM core domain. The span at 283-298 (HADEQVNEAAKEKQRQ) shows a compositional bias: basic and acidic residues. The interval 283–305 (HADEQVNEAAKEKQRQGEAQLNS) is disordered.

The protein belongs to the radical SAM superfamily. Lipoyl synthase family. [4Fe-4S] cluster is required as a cofactor.

Its subcellular location is the cytoplasm. The catalysed reaction is [[Fe-S] cluster scaffold protein carrying a second [4Fe-4S](2+) cluster] + N(6)-octanoyl-L-lysyl-[protein] + 2 oxidized [2Fe-2S]-[ferredoxin] + 2 S-adenosyl-L-methionine + 4 H(+) = [[Fe-S] cluster scaffold protein] + N(6)-[(R)-dihydrolipoyl]-L-lysyl-[protein] + 4 Fe(3+) + 2 hydrogen sulfide + 2 5'-deoxyadenosine + 2 L-methionine + 2 reduced [2Fe-2S]-[ferredoxin]. It functions in the pathway protein modification; protein lipoylation via endogenous pathway; protein N(6)-(lipoyl)lysine from octanoyl-[acyl-carrier-protein]. Its function is as follows. Catalyzes the radical-mediated insertion of two sulfur atoms into the C-6 and C-8 positions of the octanoyl moiety bound to the lipoyl domains of lipoate-dependent enzymes, thereby converting the octanoylated domains into lipoylated derivatives. The sequence is that of Lipoyl synthase from Staphylococcus aureus (strain bovine RF122 / ET3-1).